We begin with the raw amino-acid sequence, 692 residues long: MSNDNKDLFSVLNHAQSRIDRKENTQYTSAHSEIVVPAVPLSSPHHHKEDSTYNASSIRILEGLEPVRLRPGMYIGGTDSKALHHLFSEIIDNAMDEAVAGYADLIDITLDSNNYLTVTDNGRGIPIENHPQIPDKSTLEVIMTHLHSGGKFDGKAYQTSGGLHGVGISVVNALSDDMEVEVARERKLYRQRFSRGIPQSGLEELGDVYNRRGTRVCFHPDSQIFGENTAFDPEKIYKIARSKAYLFNGVKIRWNCDPAALKDAKNIPEKDVFYFPDGLKDYLSLSLKNKHLVTAEIFSGKTQQLSGHGSVEWAIAWHNGDAYIQSYCNTIPTEEGGTHETGLRQTLLRGLKAYAELIGNKRASIITSDDVMASTVVMLSVFIKDPQFVGQTKDRLATTEAQRIVENAIRDPFDHWLANSPHEATKLLNWVIERAEERLKRRQDREINRKTAVRKLRLPGKLADCSQNSAAGAELFIVEGDSAGGSAKQARNRTNQAILPLRGKILNVASAAREKMSSSQTIADLILALGCGTRSKYREEDLRYERIIIMTDADVDGAHIASLLITFFFQEIPDLIRAGHLYLAVPPLYRISQGGKVAYARDDSHKDELLKTEFTGKGKIEIGRFKGLGEMRAEQLKETTMNPKKRTLLRVSIDTFEMQETKETVQNLMGTKPEERFRFIQESSTFANNLDI.

Residues tyrosine 53, asparagine 93, aspartate 120, 162-168 (GLHGVGI), and lysine 393 each bind ATP. The Toprim domain maps to 473–587 (AELFIVEGDS…AGHLYLAVPP (115 aa)). The Mg(2+) site is built by glutamate 479, aspartate 552, and aspartate 554.

This sequence belongs to the type II topoisomerase family. ParE type 1 subfamily. As to quaternary structure, heterotetramer composed of ParC and ParE. The cofactor is Mg(2+). Requires Mn(2+) as cofactor. Ca(2+) serves as cofactor.

It carries out the reaction ATP-dependent breakage, passage and rejoining of double-stranded DNA.. Topoisomerase IV is essential for chromosome segregation. It relaxes supercoiled DNA. Performs the decatenation events required during the replication of a circular DNA molecule. The sequence is that of DNA topoisomerase 4 subunit B from Bartonella bacilliformis (strain ATCC 35685 / KC583 / Herrer 020/F12,63).